We begin with the raw amino-acid sequence, 169 residues long: Small ribosomal subunit protein bS18c (169 aa).

The disordered stretch occupies residues 1–61; the sequence is MYTSKQPFLK…RRPRIGPGDR (61 aa). Positions 27–55 are enriched in basic residues; it reads QTFRKSKQTFRKFKQPFRKSKQPFRRRPR.

The protein belongs to the bacterial ribosomal protein bS18 family. Part of the 30S ribosomal subunit.

It localises to the plastid. The protein localises to the chloroplast. This is Small ribosomal subunit protein bS18c from Agrostis stolonifera (Creeping bentgrass).